We begin with the raw amino-acid sequence, 967 residues long: Leucine-rich repeat receptor-like protein kinase PXC2 (967 aa).

The N-terminal stretch at 1-20 (MFNGAVSLLFLFLAVVSARA) is a signal peptide. Topologically, residues 21 to 609 (DPTFNDDVLG…QIRKSVLSIS (589 aa)) are extracellular. 11 LRR repeats span residues 91–114 (LQFL…EFPH), 115–139 (LGSL…FFEQ), 141–164 (GSLR…LSYC), 165–189 (STLT…WFLK), 191–212 (LKSL…LGGL), 214–236 (DLRH…IGRC), 237–260 (SSLK…MKSL), 262–284 (SCSS…IGDI), 285–307 (ATLE…SLGN), 308–332 (LEFL…LSNC), and 334–356 (NLIS…MFTG). 2 N-linked (GlcNAc...) asparagine glycosylation sites follow: N103 and N127. N-linked (GlcNAc...) asparagine glycosylation is present at N171. N219 is a glycosylation site (N-linked (GlcNAc...) asparagine). N-linked (GlcNAc...) asparagine glycosylation is found at N296, N315, and N331. N374 carries an N-linked (GlcNAc...) asparagine glycan. 7 LRR repeats span residues 384–408 (LQGL…IWIL), 410–432 (SLLQ…IGGL), 433–456 (KVAE…IGGA), 457–480 (VSLK…ISNC), 482–503 (ALNT…SIGS), 504–528 (LSNL…IEKL), and 530–552 (HLLT…GFFN). Residues N415, N446, N479, N487, N516, N535, N540, N571, and N587 are each glycosylated (N-linked (GlcNAc...) asparagine). A helical transmembrane segment spans residues 610-630 (ALIAIGAAAVIAIGVVAVTLL). Topologically, residues 631–967 (NVHARSSVSR…LIQCPSHDLE (337 aa)) are cytoplasmic. The Protein kinase domain maps to 687–959 (LNKDSELGRG…EEVVKILELI (273 aa)). ATP contacts are provided by residues 693–701 (LGRGGFGVV) and K715.

It belongs to the protein kinase superfamily. Ser/Thr protein kinase family. Expressed in the vascular strands of cotyledons, the shoot apex, hypocotyls, roots, leaves, stems and flowers.

Its subcellular location is the cell membrane. Leucine-rich repeat receptor-like protein kinase that may play a role in vascular tissues development. This chain is Leucine-rich repeat receptor-like protein kinase PXC2, found in Arabidopsis thaliana (Mouse-ear cress).